We begin with the raw amino-acid sequence, 247 residues long: UPF0309 protein Lm4b_02611 (247 aa).

Positions 31–214 (VAESIENDGV…ETMVNDNFTP (184 aa)) constitute an SIS domain.

The protein belongs to the UPF0309 family.

The sequence is that of UPF0309 protein Lm4b_02611 from Listeria monocytogenes serotype 4b (strain CLIP80459).